The sequence spans 323 residues: Phospho-N-acetylmuramoyl-pentapeptide-transferase (323 aa).

9 helical membrane-spanning segments follow: residues 5–25, 57–77, 81–101, 118–138, 140–160, 173–193, 196–216, 225–247, and 302–322; these read SAVL…PSLI, LLFI…QGLI, LWAL…DDSI, LCQV…GFQM, FGTT…IVGF, LVSG…LVNL, PGYP…LGFF, IFMG…LLLH, and IVFW…ILLV.

Belongs to the glycosyltransferase 4 family. MraY subfamily. Mg(2+) is required as a cofactor.

It is found in the cell membrane. It catalyses the reaction UDP-N-acetyl-alpha-D-muramoyl-L-alanyl-gamma-D-glutamyl-L-lysyl-D-alanyl-D-alanine + di-trans,octa-cis-undecaprenyl phosphate = Mur2Ac(oyl-L-Ala-gamma-D-Glu-L-Lys-D-Ala-D-Ala)-di-trans,octa-cis-undecaprenyl diphosphate + UMP. It participates in cell wall biogenesis; peptidoglycan biosynthesis. Functionally, catalyzes the initial step of the lipid cycle reactions in the biosynthesis of the cell wall peptidoglycan: transfers peptidoglycan precursor phospho-MurNAc-pentapeptide from UDP-MurNAc-pentapeptide onto the lipid carrier undecaprenyl phosphate, yielding undecaprenyl-pyrophosphoryl-MurNAc-pentapeptide, known as lipid I. The protein is Phospho-N-acetylmuramoyl-pentapeptide-transferase of Limosilactobacillus reuteri (strain DSM 20016) (Lactobacillus reuteri).